The chain runs to 154 residues: Superoxide dismutase [Cu-Zn] (154 aa).

Lysine 19 is covalently cross-linked (Glycyl lysine isopeptide (Lys-Gly) (interchain with G-Cter in SUMO)). Serine 26 and serine 39 each carry phosphoserine. A Zn(2+)-binding site is contributed by glutamate 43. Residues histidine 47, histidine 49, and histidine 64 each coordinate Cu cation. A disulfide bridge connects residues cysteine 58 and cysteine 147. Residue histidine 64 participates in Zn(2+) binding. Lysine 70 is covalently cross-linked (Glycyl lysine isopeptide (Lys-Gly) (interchain with G-Cter in SUMO)). Positions 72, 81, and 84 each coordinate Zn(2+). Residues serine 99 and serine 117 each carry the phosphoserine modification. Histidine 121 lines the Cu cation pocket. Threonine 132 and threonine 138 each carry phosphothreonine. Position 144 (arginine 144) interacts with substrate.

It belongs to the Cu-Zn superoxide dismutase family. In terms of assembly, homodimer in holo form. In apo form, heterodimer with CCS1. Zinc-binding at 'His-16' of CCS1 and Glu-43 of apo-SOD1 is required for this heterodimerization. The cofactor is Cu cation. Zn(2+) serves as cofactor.

It is found in the cytoplasm. It localises to the mitochondrion intermembrane space. The enzyme catalyses 2 superoxide + 2 H(+) = H2O2 + O2. In terms of biological role, destroys radicals which are normally produced within the cells and which are toxic to biological systems. This is Superoxide dismutase [Cu-Zn] from Saccharomyces cerevisiae (strain ATCC 204508 / S288c) (Baker's yeast).